A 409-amino-acid chain; its full sequence is Phospho-N-acetylmuramoyl-pentapeptide-transferase (409 aa).

A run of 10 helical transmembrane segments spans residues 23–43, 73–93, 95–115, 132–152, 214–234, 247–267, 279–299, 305–325, 331–351, and 386–406; these read YITF…TIFG, TPTM…LLLA, LNNI…AIGF, GIFK…TLYF, YAWL…SNGA, TSAI…NVIF, SGEM…FLWY, AVFM…VLAI, MLIP…VLQV, and KIVT…IVTL.

This sequence belongs to the glycosyltransferase 4 family. MraY subfamily. Requires Mg(2+) as cofactor.

It is found in the cell inner membrane. The enzyme catalyses UDP-N-acetyl-alpha-D-muramoyl-L-alanyl-gamma-D-glutamyl-meso-2,6-diaminopimeloyl-D-alanyl-D-alanine + di-trans,octa-cis-undecaprenyl phosphate = di-trans,octa-cis-undecaprenyl diphospho-N-acetyl-alpha-D-muramoyl-L-alanyl-D-glutamyl-meso-2,6-diaminopimeloyl-D-alanyl-D-alanine + UMP. It participates in cell wall biogenesis; peptidoglycan biosynthesis. Catalyzes the initial step of the lipid cycle reactions in the biosynthesis of the cell wall peptidoglycan: transfers peptidoglycan precursor phospho-MurNAc-pentapeptide from UDP-MurNAc-pentapeptide onto the lipid carrier undecaprenyl phosphate, yielding undecaprenyl-pyrophosphoryl-MurNAc-pentapeptide, known as lipid I. The polypeptide is Phospho-N-acetylmuramoyl-pentapeptide-transferase (Flavobacterium psychrophilum (strain ATCC 49511 / DSM 21280 / CIP 103535 / JIP02/86)).